A 257-amino-acid chain; its full sequence is Leucine-rich repeat-containing protein 3 (257 aa).

A signal peptide spans 1 to 32 (MGPRGRQSPSSPLAPSQGSCFFILFCLRLGAS). Residues 33–64 (CPQSCQCPDHAGAVAVHCSSRGLQEIPRDIPA) form the LRRNT domain. LRR repeat units lie at residues 65 to 86 (NTVL…AFQH), 89 to 110 (QLRE…AFSG), and 114 to 135 (GLRL…ALGK). Residues 145-198 (NPLHCECALQEALWELKLDPDSVDEIACHTSAQEQFVGKPLIQVLDSGASFCST) enclose the LRRCT domain. The chain crosses the membrane as a helical span at residues 205–225 (VAMLVTMFGWFTMVIAYVVYY).

The protein belongs to the LRRC3 family.

Its subcellular location is the membrane. The sequence is that of Leucine-rich repeat-containing protein 3 (Lrrc3) from Rattus norvegicus (Rat).